A 378-amino-acid polypeptide reads, in one-letter code: MLFKSFVTFTVLANALAAPLAHQHHQHKEEKRAVHVVTTTNVVVVTIGNGDQTTTFAAPSVAAESSVSVSVNTEPPQNHPTTTQDVASASTYPSSTDGSAASSSAAASSSSQAGSEPSGGVGSGGAKGITYSPYSDNGGCKSESQIASEIAQLSGFDVIRLYGVDCSQVEAVLKAKTSSQKIFAGIFDVSSITSGIESLAEAVKSCGSWDDIYTVSIGNELVNAGSATPSQIKAYVEEGRKALKAAGYTGPVVSVDTFIAVINNPDLCDYSDYMAVNAHAFFDGHVVAENSGAWVLQQIQRVWTACGGKKNVLITETGWPSRGDSNGVAVPSKSNQQAAISSIKSSCGASAILFTAFNDLWKADGPYNAEKYWGIYSN.

Positions 1–32 (MLFKSFVTFTVLANALAAPLAHQHHQHKEEKR) are cleaved as a signal peptide. The tract at residues 67–124 (VSVSVNTEPPQNHPTTTQDVASASTYPSSTDGSAASSSAAASSSSQAGSEPSGGVGSG) is disordered. Residues 72-93 (NTEPPQNHPTTTQDVASASTYP) show a composition bias toward polar residues. Over residues 94 to 116 (SSTDGSAASSSAAASSSSQAGSE) the composition is skewed to low complexity. The Nucleophile role is filled by Glu-316.

The protein belongs to the glycosyl hydrolase 17 family. In terms of assembly, component of a multiprotein complex of 250 kDa composed of at least HYR1, MP65, and PRA1. Post-translationally, glycosylated protein with a polysaccharide moiety composed exclusively of mannose and glucose at a ratio of 12.7 to 1. Contributes highly to the carbohydrate component of the matrix. Treatment with tunicamycin impairs glycosylation.

The protein resides in the secreted. It localises to the cell wall. Surface mannoprotein required for hyphal morphogenesis, surface adherence, and pathogenicity. Contributes in a high proportion to the carbohydrate component of the matrix due to high levels of glycosylation and may play important roles during biofilm development and maintenance. Acts as a major antigen target of host cell-mediated immune response. Induces extensive T-cell proliferation of human peripheral blood mononuclear cells. Facilitates host dendritic cells maturation and promotes cytokine production through its glycosylated portion while its protein core is essentially involved in induction of T-cell response. The polypeptide is Cell surface mannoprotein MP65 (MP65) (Candida albicans (strain SC5314 / ATCC MYA-2876) (Yeast)).